The following is an 88-amino-acid chain: UPF0367 protein AM1_1885 (88 aa).

It belongs to the UPF0367 family.

The polypeptide is UPF0367 protein AM1_1885 (Acaryochloris marina (strain MBIC 11017)).